We begin with the raw amino-acid sequence, 55 residues long: Large ribosomal subunit protein bL33A (55 aa).

Belongs to the bacterial ribosomal protein bL33 family.

This is Large ribosomal subunit protein bL33A from Mycobacterium sp. (strain KMS).